A 25-amino-acid polypeptide reads, in one-letter code: ATP synthase subunit alpha, mitochondrial (25 aa).

It belongs to the ATPase alpha/beta chains family. F-type ATPases have 2 components, CF(1) - the catalytic core - and CF(0) - the membrane proton channel. CF(1) has five subunits: alpha(3), beta(3), gamma(1), delta(1), epsilon(1). CF(0) has three main subunits: a, b and c.

It is found in the mitochondrion. The protein resides in the mitochondrion inner membrane. In terms of biological role, mitochondrial membrane ATP synthase (F(1)F(0) ATP synthase or Complex V) produces ATP from ADP in the presence of a proton gradient across the membrane which is generated by electron transport complexes of the respiratory chain. F-type ATPases consist of two structural domains, F(1) - containing the extramembraneous catalytic core, and F(0) - containing the membrane proton channel, linked together by a central stalk and a peripheral stalk. During catalysis, ATP synthesis in the catalytic domain of F(1) is coupled via a rotary mechanism of the central stalk subunits to proton translocation. Subunits alpha and beta form the catalytic core in F(1). Rotation of the central stalk against the surrounding alpha(3)beta(3) subunits leads to hydrolysis of ATP in three separate catalytic sites on the beta subunits. Subunit alpha does not bear the catalytic high-affinity ATP-binding sites. This is ATP synthase subunit alpha, mitochondrial (ATPA) from Spinacia oleracea (Spinach).